The primary structure comprises 347 residues: Endo-1,4-beta-xylanase 3 (347 aa).

An N-terminal signal peptide occupies residues 1–16 (MKANVILCLLAPLVAA). Residues 17 to 45 (LPTETIHLDPELAALRANLTERTADLWDR) constitute a propeptide that is removed on maturation. Pyrrolidone carboxylic acid is present on Gln46. One can recognise a GH10 domain in the interval 46-345 (QASQSIDQLI…KPAYNSIVGI (300 aa)). The active-site Proton donor is the Glu176. The active-site Nucleophile is the Glu282. An intrachain disulfide couples Cys300 to Cys306.

This sequence belongs to the glycosyl hydrolase 10 (cellulase F) family. In terms of assembly, monomer. Post-translationally, not glycosylated.

It localises to the secreted. It catalyses the reaction Endohydrolysis of (1-&gt;4)-beta-D-xylosidic linkages in xylans.. It functions in the pathway glycan degradation; xylan degradation. Its function is as follows. Glycoside hydrolase involved in the hydrolysis of xylan, a major plant cell wall hemicellulose made up of 1,4-beta-linked D-xylopyranose residues. Catalyzes the endohydrolysis of the main-chain 1,4-beta-glycosidic bonds connecting the xylose subunits yielding various xylooligosaccharides and xylose. Produces xylobiose and xylotriose as the main degradation products. The polypeptide is Endo-1,4-beta-xylanase 3 (xyn3) (Hypocrea jecorina (strain QM6a) (Trichoderma reesei)).